The primary structure comprises 439 residues: Glutamine synthetase (439 aa).

Positions 12–93 (SKIKFVQLVF…VYGFIYKDNK (82 aa)) constitute a GS beta-grasp domain. One can recognise a GS catalytic domain in the interval 99–439 (PRGILKRALE…EWELERYFFL (341 aa)). E122 and E124 together coordinate Mg(2+). E172 serves as a coordination point for ATP. Residues E177 and E184 each contribute to the Mg(2+) site. G229 lines the L-glutamate pocket. Mg(2+) is bound at residue H233. Residues 235 to 237 (HIS) and S237 each bind ATP. Positions 283, 289, and 301 each coordinate L-glutamate. ATP is bound by residues R301, R306, and K313. E318 serves as a coordination point for Mg(2+). R320 contributes to the L-glutamate binding site.

It belongs to the glutamine synthetase family. In terms of assembly, oligomer of 12 subunits arranged in the form of two hexagons. Mg(2+) serves as cofactor.

Its subcellular location is the cytoplasm. The catalysed reaction is L-glutamate + NH4(+) + ATP = L-glutamine + ADP + phosphate + H(+). Functionally, probably involved in nitrogen metabolism via ammonium assimilation. Catalyzes the ATP-dependent biosynthesis of glutamine from glutamate and ammonia. The chain is Glutamine synthetase from Pyrococcus woesei.